Reading from the N-terminus, the 819-residue chain is Protein EFR3 homolog A (819 aa).

The segment at D210–P230 is disordered.

It belongs to the EFR3 family. As to quaternary structure, component of a phosphatidylinositol 4-kinase (PI4K) complex. Palmitoylated at its N-terminus, anchoring the protein to the plasma membrane.

It localises to the cell membrane. Functionally, component of a complex required to localize phosphatidylinositol 4-kinase (PI4K) to the plasma membrane. The complex acts as a regulator of phosphatidylinositol 4-phosphate (PtdIns(4)P) synthesis. In the complex, efr3a probably acts as the membrane-anchoring component. This chain is Protein EFR3 homolog A (efr3a), found in Xenopus laevis (African clawed frog).